Reading from the N-terminus, the 308-residue chain is Eugenol synthase 1 (308 aa).

NADP(+)-binding positions include 13 to 16 (TGYI), 35 to 45 (VRESTVSDPAK), arginine 36, 86 to 88 (QMQ), 111 to 113 (SEF), lysine 133, and 153 to 155 (NCF). The active-site Proton donor/acceptor is lysine 133.

It belongs to the NmrA-type oxidoreductase family. As to expression, in flowers, mostly expressed in limbs, and, to a lower extent, in tubes.

The catalysed reaction is eugenol + a carboxylate + NADP(+) = a coniferyl ester + NADPH. It carries out the reaction eugenol + acetate + NADP(+) = (E)-coniferyl acetate + NADPH. The protein operates within aromatic compound metabolism; phenylpropanoid biosynthesis. Functionally, involved in the biosynthesis of the floral volatile eugenol. Catalyzes the synthesis of the phenylpropene eugenol from coniferyl acetate. Phenylpropenes are produced by plants as defense compounds with antimicrobial and antianimal properties, or as floral attractants of pollinators. The chain is Eugenol synthase 1 from Petunia hybrida (Petunia).